A 434-amino-acid chain; its full sequence is uncharacterized protein (434 aa).

The signal sequence occupies residues 1-17 (MTFLLFQLLVLLRYSIG). Helical transmembrane passes span 48-68 (AAISLDFIFIVFPMLLFFTVL), 70-90 (EWVYHGTGLLSLLVLILSVTA), 112-132 (YRVALMLITCLCILAVDFTIF), 141-161 (TYGTSLMDLGVGSFVLANAVV), 173-193 (WITGIKATAPLLLLGFIRLVT), 206-226 (YGVHWNFFFTLAAISILTSFV), 232-252 (YCGLLGFAVLAGYQTWLLSGL), 271-291 (EGVYSILGYWGMYLLGVHLGY), 305-325 (TSSIARVFLVSLLLWIVTILF), 344-364 (WVLAQDLQALGIFMLSSYIPL), 380-400 (ATFLLANLVTGMVNLTVDTIF), and 404-424 (FSSLLILTAYAFALSAIIGTI).

The protein resides in the membrane. This is an uncharacterized protein from Arabidopsis thaliana (Mouse-ear cress).